A 219-amino-acid chain; its full sequence is Large ribosomal subunit protein uL3 (219 aa).

Positions 133–153 are disordered; it reads GRASHGNSRSHNVPGSIGMAQ. Position 153 is an N5-methylglutamine (Q153).

It belongs to the universal ribosomal protein uL3 family. As to quaternary structure, part of the 50S ribosomal subunit. Forms a cluster with proteins L14 and L19. In terms of processing, methylated by PrmB.

Its function is as follows. One of the primary rRNA binding proteins, it binds directly near the 3'-end of the 23S rRNA, where it nucleates assembly of the 50S subunit. This is Large ribosomal subunit protein uL3 from Burkholderia mallei (strain NCTC 10247).